The following is a 74-amino-acid chain: Small ribosomal subunit protein bS18 (74 aa).

Belongs to the bacterial ribosomal protein bS18 family. As to quaternary structure, part of the 30S ribosomal subunit. Forms a tight heterodimer with protein bS6.

In terms of biological role, binds as a heterodimer with protein bS6 to the central domain of the 16S rRNA, where it helps stabilize the platform of the 30S subunit. The sequence is that of Small ribosomal subunit protein bS18 from Zymomonas mobilis subsp. mobilis (strain ATCC 31821 / ZM4 / CP4).